The chain runs to 31 residues: METNILALMATALFIIIPTAFLIILYAQTNK.

Residues 5 to 25 (ILALMATALFIIIPTAFLIIL) traverse the membrane as a helical segment.

It belongs to the PsbM family. As to quaternary structure, PSII is composed of 1 copy each of membrane proteins PsbA, PsbB, PsbC, PsbD, PsbE, PsbF, PsbH, PsbI, PsbJ, PsbK, PsbL, PsbM, PsbT, PsbX, PsbY, PsbZ, Psb30/Ycf12, at least 3 peripheral proteins of the oxygen-evolving complex and a large number of cofactors. It forms dimeric complexes.

It is found in the plastid. The protein resides in the chloroplast thylakoid membrane. In terms of biological role, one of the components of the core complex of photosystem II (PSII). PSII is a light-driven water:plastoquinone oxidoreductase that uses light energy to abstract electrons from H(2)O, generating O(2) and a proton gradient subsequently used for ATP formation. It consists of a core antenna complex that captures photons, and an electron transfer chain that converts photonic excitation into a charge separation. This subunit is found at the monomer-monomer interface. The protein is Photosystem II reaction center protein M of Mesostigma viride (Green alga).